The chain runs to 217 residues: Uracil-DNA glycosylase (217 aa).

Catalysis depends on aspartate 62, which acts as the Proton acceptor.

It belongs to the uracil-DNA glycosylase (UDG) superfamily. UNG family.

The protein resides in the cytoplasm. The enzyme catalyses Hydrolyzes single-stranded DNA or mismatched double-stranded DNA and polynucleotides, releasing free uracil.. Excises uracil residues from the DNA which can arise as a result of misincorporation of dUMP residues by DNA polymerase or due to deamination of cytosine. The chain is Uracil-DNA glycosylase from Streptococcus equi subsp. zooepidemicus (strain MGCS10565).